The following is a 256-amino-acid chain: Deoxyribose-phosphate aldolase (256 aa).

Residue aspartate 102 is the Proton donor/acceptor of the active site. Residue lysine 165 is the Schiff-base intermediate with acetaldehyde of the active site. Residue lysine 197 is the Proton donor/acceptor of the active site.

Belongs to the DeoC/FbaB aldolase family. DeoC type 2 subfamily.

Its subcellular location is the cytoplasm. It carries out the reaction 2-deoxy-D-ribose 5-phosphate = D-glyceraldehyde 3-phosphate + acetaldehyde. It participates in carbohydrate degradation; 2-deoxy-D-ribose 1-phosphate degradation; D-glyceraldehyde 3-phosphate and acetaldehyde from 2-deoxy-alpha-D-ribose 1-phosphate: step 2/2. In terms of biological role, catalyzes a reversible aldol reaction between acetaldehyde and D-glyceraldehyde 3-phosphate to generate 2-deoxy-D-ribose 5-phosphate. This is Deoxyribose-phosphate aldolase from Shewanella baltica (strain OS223).